Consider the following 161-residue polypeptide: Zinc metalloproteinase/disintegrin (161 aa).

The region spanning 1-72 (ERDLLVAVTM…ENPQCILNKH (72 aa)) is the Peptidase M12B domain. Zn(2+) is bound at residue His-12. Glu-13 is a catalytic residue. Zn(2+) contacts are provided by His-16 and His-22. 2 disulfide bridges follow: Cys-27-Cys-51 and Cys-29-Cys-34. A propeptide spanning residues 73–88 (LRTDTVSTPVSGNELL) is cleaved from the precursor. The region spanning 89 to 161 (EAGEECDCGT…ADCPRNRFHA (73 aa)) is the Disintegrin domain. 6 cysteine pairs are disulfide-bonded: Cys-94–Cys-109, Cys-96–Cys-104, Cys-103–Cys-126, Cys-117–Cys-123, Cys-122–Cys-147, and Cys-135–Cys-154. Residues 139-141 (RGD) carry the Cell attachment site motif.

The protein belongs to the venom metalloproteinase (M12B) family. P-II subfamily. P-IIa sub-subfamily. Monomer. In terms of tissue distribution, expressed by the venom gland.

The protein resides in the secreted. In terms of biological role, impairs hemostasis in the envenomed animal. Disintegrin: inhibit platelet aggregation induced by ADP, thrombin, platelet-activating factor and collagen. Acts by inhibiting fibrinogen interaction with platelet receptors GPIIb/GPIIIa (ITGA2B/ITGB3). This Bothrops jararaca (Jararaca) protein is Zinc metalloproteinase/disintegrin.